The following is a 321-amino-acid chain: Beta-ketoacyl-[acyl-carrier-protein] synthase III (321 aa).

Catalysis depends on residues cysteine 114 and histidine 248. Residues 249-253 form an ACP-binding region; the sequence is QANKR. Asparagine 278 is a catalytic residue.

This sequence belongs to the thiolase-like superfamily. FabH family. In terms of assembly, homodimer.

It localises to the cytoplasm. The enzyme catalyses malonyl-[ACP] + acetyl-CoA + H(+) = 3-oxobutanoyl-[ACP] + CO2 + CoA. It participates in lipid metabolism; fatty acid biosynthesis. Its function is as follows. Catalyzes the condensation reaction of fatty acid synthesis by the addition to an acyl acceptor of two carbons from malonyl-ACP. Catalyzes the first condensation reaction which initiates fatty acid synthesis and may therefore play a role in governing the total rate of fatty acid production. Possesses both acetoacetyl-ACP synthase and acetyl transacylase activities. Its substrate specificity determines the biosynthesis of branched-chain and/or straight-chain of fatty acids. This Sphingopyxis alaskensis (strain DSM 13593 / LMG 18877 / RB2256) (Sphingomonas alaskensis) protein is Beta-ketoacyl-[acyl-carrier-protein] synthase III.